Reading from the N-terminus, the 296-residue chain is Nucleotide-binding protein spr1424 (296 aa).

13–20 (GMGGAGKT) lines the ATP pocket. Residue 63-66 (DMRS) participates in GTP binding.

This sequence belongs to the RapZ-like family.

Displays ATPase and GTPase activities. In Streptococcus pneumoniae (strain ATCC BAA-255 / R6), this protein is Nucleotide-binding protein spr1424.